The sequence spans 875 residues: ATP-dependent helicase Lhr-Core (875 aa).

ATP contacts are provided by Gln35, Lys58, Thr59, Asp173, Glu174, Ile355, Arg372, and His375. One can recognise a Helicase ATP-binding domain in the interval 39-230 (IPLIKQNYNV…FLVGKDREYR (192 aa)). The DEIH box motif lies at 173–176 (DEIH). The Helicase C-terminal domain occupies 247–419 (PVKDLVHSSE…SIHIPKNPLD (173 aa)). A WH domain region spans residues 420–506 (VLSQIIVSAS…IFYTNSGTIP (87 aa)). Positions 507 to 875 (DEAMISVVTE…VNIELEYTSV (369 aa)) are domain 4.

It belongs to the Lhr helicase family. Lhr-Core subfamily. Monomer and homodimer. The monomeric form has helicase, ATPase and strand annealing activities, while the dimeric form only has ATPAse and strand annealing activities. Interacts with DNA topoisomerase 3 (topA).

The catalysed reaction is Couples ATP hydrolysis with the unwinding of duplex DNA by translocating in the 3'-5' direction.. It carries out the reaction ATP + H2O = ADP + phosphate + H(+). DNA topoisomerase 3 (topA) inhibits helicase activity on Holliday junctions (HJ) but has no effect on ATPase activity. Functionally, DNA helicase that translocates in a 3'-5' direction on single-stranded (ss)DNA, probably involved in DNA repair. Unwinds DNA in a 3'-5' direction, unwinding is ATP-dependent, acts preferentially on fork and 3'-tailed DNA; bubble and blunt-ended double-stranded (ds)DNA are not substrates. Has winding and unwinding activity, unwinds Holliday junction (HJ) DNA in the presence of ATP, the main product is forked DNA, single-stranded binding protein (SSB) does not stimulate activity. Anneals complementary oligonucleotides in an ATP-independent manner to form HJ and fork structures, thus can perform strand exchange. Preferentially binds HJ, forked and ssDNA, dsDNA is bound less well. LhrC-Core (Hel112) inhibits the exonuclease activity of the HerA-NurA complex on ss- and dsDNA, has no effect on ssDNA nicking by NurA; HerA-NurA are involved in DNA end-resection during DNA double-strand break repair. The polypeptide is ATP-dependent helicase Lhr-Core (Saccharolobus solfataricus (strain ATCC 35092 / DSM 1617 / JCM 11322 / P2) (Sulfolobus solfataricus)).